The following is a 250-amino-acid chain: Protein lin-28 homolog B (250 aa).

The disordered stretch occupies residues Met1–Gln26. Positions Arg29–Pro102 constitute a CSD domain. Phosphoserine occurs at positions 54, 96, 105, and 110. A disordered region spans residues Arg98–Gly126. The Bipartite nuclear localization signal motif lies at Arg112 to Lys125. Residues Pro114–Lys125 show a composition bias toward basic residues. CCHC-type zinc fingers lie at residues Asp127 to Leu144 and Lys149 to His166. Residues Cys129, Cys132, His137, Cys142, Cys151, Cys154, His159, and Cys164 each coordinate Zn(2+). Residues Val169–Thr250 are disordered. Residues Pro173–Leu191 are compositionally biased toward polar residues. Ser203 carries the post-translational modification Phosphoserine. Over residues Ala210–Gly219 the composition is skewed to basic and acidic residues. The span at Arg220–Ser231 shows a compositional bias: polar residues. The Nucleolar localization signal signature appears at Lys239–Thr250.

This sequence belongs to the lin-28 family. Expressed at high levels in the placenta and, at mucher lower, in testis and fetal liver. Isoform 1 is only detected in placenta and in moderately and poorly differentiated hepatocellular carcinoma cells (at protein level). Isoform 2 is detected in fetal liver, non-tumor liver tissues, as well as well-differentiated tumor tissues (at protein level). Tends to be up-regulated in triple-negative (ER-,PR-,HER2-) breast tumors, as well as in liver, ovarian, and thyroid carcinomas.

It localises to the nucleus. It is found in the nucleolus. The protein localises to the cytoplasm. Its function is as follows. Suppressor of microRNA (miRNA) biogenesis, including that of let-7 and possibly of miR107, miR-143 and miR-200c. Binds primary let-7 transcripts (pri-let-7), including pri-let-7g and pri-let-7a-1, and sequester them in the nucleolus, away from the microprocessor complex, hence preventing their processing into mature miRNA. Does not act on pri-miR21. The repression of let-7 expression is required for normal development and contributes to maintain the pluripotent state of embryonic stem cells by preventing let-7-mediated differentiation. When overexpressed, recruits ZCCHC11/TUT4 uridylyltransferase to pre-let-7 transcripts, leading to their terminal uridylation and degradation. This activity might not be relevant in vivo, as LIN28B-mediated inhibition of let-7 miRNA maturation appears to be ZCCHC11-independent. Interaction with target pre-miRNAs occurs via an 5'-GGAG-3' motif in the pre-miRNA terminal loop. Mediates MYC-induced let-7 repression. When overexpressed, isoform 1 stimulates growth of the breast adenocarcinoma cell line MCF-7. Isoform 2 has no effect on cell growth. This is Protein lin-28 homolog B (LIN28B) from Homo sapiens (Human).